The sequence spans 504 residues: Alpha-L-arabinofuranosidase C (504 aa).

4 N-linked (GlcNAc...) asparagine glycosylation sites follow: Asn-81, Asn-152, Asn-269, and Asn-329.

This sequence belongs to the glycosyl hydrolase 51 family.

The protein localises to the secreted. The catalysed reaction is Hydrolysis of terminal non-reducing alpha-L-arabinofuranoside residues in alpha-L-arabinosides.. It functions in the pathway glycan metabolism; L-arabinan degradation. In terms of biological role, alpha-L-arabinofuranosidase involved in the degradation of arabinoxylan, a major component of plant hemicellulose. Acts only on small linear 1,5-alpha-linked L-arabinofuranosyl oligosaccharides. This chain is Alpha-L-arabinofuranosidase C (abfC), found in Emericella nidulans (strain FGSC A4 / ATCC 38163 / CBS 112.46 / NRRL 194 / M139) (Aspergillus nidulans).